The following is a 433-amino-acid chain: B3 domain-containing protein Os04g0676600 (433 aa).

Disordered stretches follow at residues M1–Q29 and F216–N283. Positions G13 to F24 are enriched in basic and acidic residues. Residues F216–A229 show a composition bias toward low complexity. Over residues D237–E265 the composition is skewed to basic and acidic residues. Polar residues predominate over residues T269–N283. Residues L297–I399 constitute a DNA-binding region (TF-B3).

It localises to the nucleus. Functionally, probable transcription regulator that binds specifically to the DNA sequence 5'-CATGC-3' of the IDE1 element found in the promoter of the barley iron deficiency-inducible gene IDS2. The sequence is that of B3 domain-containing protein Os04g0676600 from Oryza sativa subsp. japonica (Rice).